A 954-amino-acid chain; its full sequence is Glycine dehydrogenase (decarboxylating) (954 aa).

K704 is subject to N6-(pyridoxal phosphate)lysine.

It belongs to the GcvP family. The glycine cleavage system is composed of four proteins: P, T, L and H. The cofactor is pyridoxal 5'-phosphate.

It catalyses the reaction N(6)-[(R)-lipoyl]-L-lysyl-[glycine-cleavage complex H protein] + glycine + H(+) = N(6)-[(R)-S(8)-aminomethyldihydrolipoyl]-L-lysyl-[glycine-cleavage complex H protein] + CO2. Functionally, the glycine cleavage system catalyzes the degradation of glycine. The P protein binds the alpha-amino group of glycine through its pyridoxal phosphate cofactor; CO(2) is released and the remaining methylamine moiety is then transferred to the lipoamide cofactor of the H protein. In Agrobacterium fabrum (strain C58 / ATCC 33970) (Agrobacterium tumefaciens (strain C58)), this protein is Glycine dehydrogenase (decarboxylating).